The chain runs to 322 residues: uncharacterized protein (322 aa).

Residues 212–234 (VCALLVGAISVATAGAAFSIIIV) form a helical membrane-spanning segment.

Its subcellular location is the membrane. This is an uncharacterized protein from Rickettsia prowazekii (strain Madrid E).